A 199-amino-acid chain; its full sequence is Nucleoside triphosphate pyrophosphatase (199 aa).

Catalysis depends on aspartate 76, which acts as the Proton acceptor.

Belongs to the Maf family. It depends on a divalent metal cation as a cofactor.

The protein resides in the cytoplasm. The catalysed reaction is a ribonucleoside 5'-triphosphate + H2O = a ribonucleoside 5'-phosphate + diphosphate + H(+). The enzyme catalyses a 2'-deoxyribonucleoside 5'-triphosphate + H2O = a 2'-deoxyribonucleoside 5'-phosphate + diphosphate + H(+). Functionally, nucleoside triphosphate pyrophosphatase. May have a dual role in cell division arrest and in preventing the incorporation of modified nucleotides into cellular nucleic acids. This is Nucleoside triphosphate pyrophosphatase from Roseobacter denitrificans (strain ATCC 33942 / OCh 114) (Erythrobacter sp. (strain OCh 114)).